The chain runs to 513 residues: MQLNSTEIAELIKNRIEQFNVVSEARNEGTIVSVTDGIIRINGLADVMQGEMIELPGSRFAIALNLDRDSVGAVVMGPYADLAEGQKVKGTGRILEVPVGRGLLGRVVNTLGEPIDGKGPIENDGFSPVEVIAPGVIDRKSVDEPVQTGIKSIDAMIPIGRGQRELIIGDRQIGKSAIALDAIINQKNTGIKSIYVAIGQKASTVANVVRSLEEHGALSNTIVVVASASEAAALQYLAPYAGCSMGEYFRDRGEDALIVYDDLSKQAVAYRQISLLLRRPPGREAYPGDVFYLHSRLLERAARVNEAYVEKFTNGEVKGKTGSLTALPIIETQAGDVSAFVPTNVISITDGQIFLQSDLFNSGIRPAVNAGISVSRVGGAAQTKIIKKLGGGIRLALAQYAELAAFAQFASDLDDATRAQLEHGQRVTELMKQKQYSPLSIAETAVSLFAAEKGFLNDVAINKVVDFEEALHAYMSNEQAALMATINEKGDYNKDIEASLKTALENFKSTQTW.

169-176 lines the ATP pocket; the sequence is GDRQIGKS.

It belongs to the ATPase alpha/beta chains family. F-type ATPases have 2 components, CF(1) - the catalytic core - and CF(0) - the membrane proton channel. CF(1) has five subunits: alpha(3), beta(3), gamma(1), delta(1), epsilon(1). CF(0) has three main subunits: a(1), b(2) and c(9-12). The alpha and beta chains form an alternating ring which encloses part of the gamma chain. CF(1) is attached to CF(0) by a central stalk formed by the gamma and epsilon chains, while a peripheral stalk is formed by the delta and b chains.

The protein localises to the cell inner membrane. The enzyme catalyses ATP + H2O + 4 H(+)(in) = ADP + phosphate + 5 H(+)(out). In terms of biological role, produces ATP from ADP in the presence of a proton gradient across the membrane. The alpha chain is a regulatory subunit. This chain is ATP synthase subunit alpha, found in Colwellia psychrerythraea (strain 34H / ATCC BAA-681) (Vibrio psychroerythus).